The following is a 282-amino-acid chain: Elongation factor Ts (282 aa).

Residues 80–83 (TDFV) are involved in Mg(2+) ion dislocation from EF-Tu.

It belongs to the EF-Ts family.

Its subcellular location is the cytoplasm. In terms of biological role, associates with the EF-Tu.GDP complex and induces the exchange of GDP to GTP. It remains bound to the aminoacyl-tRNA.EF-Tu.GTP complex up to the GTP hydrolysis stage on the ribosome. In Chlamydia trachomatis serovar A (strain ATCC VR-571B / DSM 19440 / HAR-13), this protein is Elongation factor Ts.